Here is a 221-residue protein sequence, read N- to C-terminus: Esterase C25G4.2 (221 aa).

Catalysis depends on charge relay system residues Ser106, Asp166, and His194.

It belongs to the LovG family.

The polypeptide is Esterase C25G4.2 (Caenorhabditis elegans).